A 596-amino-acid chain; its full sequence is Structural protein precursor VP8 (596 aa).

Its subcellular location is the virion. Functionally, 120 subunits of the putative clamp protein VP8b appear to stabilize the capsid shell. The sequence is that of Structural protein precursor VP8 from Oryza latifolia (Indian wild rice).